The sequence spans 153 residues: UPF0768 protein PB2B2.18 (153 aa).

It belongs to the UPF0768 family.

This chain is UPF0768 protein PB2B2.18, found in Schizosaccharomyces pombe (strain 972 / ATCC 24843) (Fission yeast).